We begin with the raw amino-acid sequence, 382 residues long: Serine/threonine-protein kinase US3 homolog (382 aa).

The segment covering 1–10 (MENKQCDHLT) has biased composition (basic and acidic residues). Residues 1–75 (MENKQCDHLT…ASESDEDDDD (75 aa)) are disordered. Residues 12–24 (WFSTTSDASESMD) show a composition bias toward polar residues. Residues 45-75 (ADEDLYSDISEGDLEYSDCDSASESDEDDDD) are compositionally biased toward acidic residues. The Protein kinase domain maps to 93-379 (YTVIKTLTPG…AEELLSYPMF (287 aa)). ATP-binding positions include 99-107 (LTPGSEGRV) and Lys-122. Catalysis depends on Asp-207, which acts as the Proton acceptor.

This sequence belongs to the protein kinase superfamily. Ser/Thr protein kinase family. In terms of processing, phosphorylated by protein 49; this phosphorylation regulates subsequent phosphorylation of proteins 26 and 29 by US3 homolog. Autophosphorylated.

It localises to the host cytoplasm. It is found in the host nucleus. It carries out the reaction L-seryl-[protein] + ATP = O-phospho-L-seryl-[protein] + ADP + H(+). It catalyses the reaction L-threonyl-[protein] + ATP = O-phospho-L-threonyl-[protein] + ADP + H(+). In terms of biological role, multifunctional serine/threonine kinase that plays a role in several processes including egress of virus particles from the nucleus, modulation of the actin cytoskeleton and inhibition of apoptosis. Phosphorylates protein 26 and 29, two critical regulators of capsid budding from nucleus to endoplasmic reticulum, thereby facilitating virion egress. Modulates and redistributes host components of the nuclear envelope, including LMNA, emerin/EMD and the nuclear matrix protein MATR3. Phosphorylates envelope glycoprotein B (gB), probably to direct it to the cell surface. Promotes virus intracellular spread by restructuring host cell cytoskeleton. Blocks host apoptosis to extend cell survival and allow efficient viral replication. Promotes viral gene expression by phosphorylating host HDAC2 to reduce viral genome silencing. The protein is Serine/threonine-protein kinase US3 homolog of Equine herpesvirus 1 (strain Ab4p) (EHV-1).